Here is a 348-residue protein sequence, read N- to C-terminus: NADH-ubiquinone oxidoreductase chain 2 (348 aa).

10 helical membrane passes run 2–22 (SPYV…LTLF), 26–46 (WLMA…MMTY), 55–75 (AAIK…FAII), 96–116 (VLMT…FWVP), 149–169 (LNMK…GWGG), 178–198 (ILAY…MINP), 199–219 (SLAL…FLML), 242–262 (TAIL…GFMP), 276–296 (IIMA…YMRI), and 323–343 (INII…TPLL).

This sequence belongs to the complex I subunit 2 family. In terms of assembly, core subunit of respiratory chain NADH dehydrogenase (Complex I) which is composed of 45 different subunits. Interacts with TMEM242.

It is found in the mitochondrion inner membrane. The enzyme catalyses a ubiquinone + NADH + 5 H(+)(in) = a ubiquinol + NAD(+) + 4 H(+)(out). Core subunit of the mitochondrial membrane respiratory chain NADH dehydrogenase (Complex I) that is believed to belong to the minimal assembly required for catalysis. Complex I functions in the transfer of electrons from NADH to the respiratory chain. The immediate electron acceptor for the enzyme is believed to be ubiquinone. The sequence is that of NADH-ubiquinone oxidoreductase chain 2 from Osphranter robustus (Wallaroo).